The following is a 736-amino-acid chain: Dynamin-1-like protein (736 aa).

Position 1 is an N-acetylmethionine (methionine 1). The Dynamin-type G domain maps to 22–302 (IIQLPQIVVV…LMHHIRDCLP (281 aa)). The G1 motif stretch occupies residues 32 to 39 (GTQSSGKS). GTP is bound at residue 32–40 (GTQSSGKSS). The segment at 58–60 (VTR) is G2 motif. Positions 146–149 (DLPG) are G3 motif. The tract at residues 215-218 (TKLD) is G4 motif. Residues 215-221 (TKLDLMD) and 246-249 (NRSQ) contribute to the GTP site. The tract at residues 245-248 (VNRS) is G5 motif. Residues 344-489 (YCNTIEGTAK…NEMVHNLVAI (146 aa)) form a middle domain region. The segment at 448-685 (NYSTQELLRF…NHVKDTLQSE (238 aa)) is interaction with GSK3B. The b domain stretch occupies residues 502-569 (ADACGLMNNN…IQDNRRETKN (68 aa)). The disordered stretch occupies residues 522–554 (RELPSAGSRDKSSKVPSALAPASQEPPPAASAE). Serine 529 is subject to Phosphoserine. Residues lysine 532, lysine 535, lysine 558, and lysine 568 each participate in a glycyl lysine isopeptide (Lys-Gly) (interchain with G-Cter in SUMO) cross-link. Residues 542–736 (PASQEPPPAA…IAEIRETHLW (195 aa)) form a C-terminal dimerization domain region. Residues 566–588 (ETKNVPSAGGGIGDGGQEPTTGN) form a disordered region. O-linked (GlcNAc) threonine glycans are attached at residues threonine 585 and threonine 586. Lysine 594 participates in a covalent cross-link: Glycyl lysine isopeptide (Lys-Gly) (interchain with G-Cter in SUMO). Lysine 597 is modified (N6-acetyllysine; alternate). Residue lysine 597 forms a Glycyl lysine isopeptide (Lys-Gly) (interchain with G-Cter in SUMO); alternate linkage. A Glycyl lysine isopeptide (Lys-Gly) (interchain with G-Cter in SUMO) cross-link involves residue lysine 606. Position 607 is a phosphoserine (serine 607). Lysine 608 participates in a covalent cross-link: Glycyl lysine isopeptide (Lys-Gly) (interchain with G-Cter in SUMO). Position 616 is a phosphoserine; by PINK1 (serine 616). The residue at position 637 (serine 637) is a Phosphoserine; by CAMK1 and PKA. Cysteine 644 carries the S-nitrosocysteine modification. The GED domain maps to 644–735 (CEVIERLIKS…IIAEIRETHL (92 aa)). Residues 654–668 (YFLIVRKNIQDSVPK) are important for homodimerization.

This sequence belongs to the TRAFAC class dynamin-like GTPase superfamily. Dynamin/Fzo/YdjA family. As to quaternary structure, homotetramer; dimerizes through the N-terminal GTP-middle region of one molecule binding to the GED domain of another DNM1L molecule. Oligomerizes in a GTP-dependent manner to form membrane-associated tubules with a spiral pattern. Interacts with GSK3B and MARCHF5. Interacts (via the GTPase and B domains) with UBE2I; the interaction promotes sumoylation of DNM1L, mainly in its B domain. Interacts with PPP3CA; the interaction dephosphorylates DNM1L and regulates its transition to mitochondria. Interacts with BCL2L1 isoform BCL-X(L) and CLTA; DNM1L and BCL2L1 isoform BCL-X(L) may form a complex in synaptic vesicles that also contains clathrin and MFF. Interacts with MFF; the interaction is inhibited by C11orf65/MFI. Interacts with FIS1. Interacts with MIEF2 and MIEF1; GTP-dependent, regulates GTP hydrolysis and DNM1L oligomerization. Interacts with PGAM5; this interaction leads to dephosphorylation at Ser-656 and activation of GTPase activity and eventually to mitochondria fragmentation. Interacts with RALBP1; during mitosis, recruits DNM1L to the mitochondrion and mediates its activation by the mitotic kinase cyclin B-CDK1. Interacts with FUNDC1; this interaction recruits DNM1L/DRP1 at ER-mitochondria contact sites. Phosphorylation/dephosphorylation events on two sites near the GED domain regulate mitochondrial fission. Phosphorylation on Ser-637 inhibits mitochondrial fission probably through preventing intramolecular interaction. Dephosphorylated on this site by PPP3CA which promotes mitochondrial fission. Phosphorylation on Ser-616 by Pink1 activates the GTPase activity and promotes mitochondrial fission. Phosphorylated in a circadian manner at Ser-637. Dephosphorylated by PGAM5. In terms of processing, sumoylated on various lysine residues within the B domain, probably by MUL1. Sumoylation positively regulates mitochondrial fission. Desumoylated by SENP5 during G2/M transition of mitosis. Appears to be linked to its catalytic activity. Post-translationally, S-nitrosylation increases DNM1L dimerization, mitochondrial fission and causes neuronal damage. O-GlcNAcylation augments the level of the GTP-bound active form of DNM1L and induces translocation from the cytoplasm to mitochondria in cardiomyocytes. It also decreases phosphorylation at Ser-637. In terms of processing, ubiquitination by MARCHF5 affects mitochondrial morphology. Expressed in the cerebellum and in several regions of the cerebrum and diencephalon. Strongly expressed in the cerebellar Purkinje cells and in the pontile giant neurons. In terms of tissue distribution, widely expressed. As to expression, brain-specific. Brain-specific (at protein level). Expressed in most of the subregions of the brain, including the cerebellum, midbrain, hippocampus, striatum, cerebral cortex, and brain stem. Weakly expressed in the olfactory bulb.

The protein localises to the cytoplasm. Its subcellular location is the cytosol. The protein resides in the golgi apparatus. It localises to the endomembrane system. It is found in the mitochondrion outer membrane. The protein localises to the peroxisome. Its subcellular location is the membrane. The protein resides in the clathrin-coated pit. It localises to the cytoplasmic vesicle. It is found in the secretory vesicle. The protein localises to the synaptic vesicle membrane. Its subcellular location is the lysosome. The protein resides in the late endosome. It localises to the cell membrane. It is found in the postsynaptic density. The enzyme catalyses GTP + H2O = GDP + phosphate + H(+). Functions in mitochondrial and peroxisomal division. Mediates membrane fission through oligomerization into membrane-associated tubular structures that wrap around the scission site to constrict and sever the mitochondrial membrane through a GTP hydrolysis-dependent mechanism. The specific recruitment at scission sites is mediated by membrane receptors like MFF, MIEF1 and MIEF2 for mitochondrial membranes. While the recruitment by the membrane receptors is GTP-dependent, the following hydrolysis of GTP induces the dissociation from the receptors and allows DNM1L filaments to curl into closed rings that are probably sufficient to sever a double membrane. Acts downstream of PINK1 to promote mitochondrial fission in a PRKN-dependent manner. Plays an important role in mitochondrial fission during mitosis. Required for formation of endocytic vesicles. Through its function in mitochondrial division, ensures the survival of at least some types of postmitotic neurons, including Purkinje cells, by suppressing oxidative damage. Required for normal brain development, including that of cerebellum. Facilitates developmentally regulated apoptosis during neural tube formation. Required for a normal rate of cytochrome c release and caspase activation during apoptosis; this requirement may depend upon the cell type and the physiological apoptotic cues. Proposed to regulate synaptic vesicle membrane dynamics through association with BCL2L1 isoform Bcl-X(L) which stimulates its GTPase activity in synaptic vesicles; the function may require its recruitment by MFF to clathrin-containing vesicles. Required for programmed necrosis execution. Rhythmic control of its activity following phosphorylation at Ser-637 is essential for the circadian control of mitochondrial ATP production. Its function is as follows. Regulates postsynaptic clathrin-mediated endocytosis by positioning the endocytic zone at the postsynaptic density, independently of mitochondrial division. In Mus musculus (Mouse), this protein is Dynamin-1-like protein.